The chain runs to 843 residues: Probable cleavage and polyadenylation specificity factor subunit 2 (843 aa).

Over residues 414–425 the composition is skewed to basic and acidic residues; it reads AEETRLRMERAR. Disordered stretches follow at residues 414–443 and 691–753; these read AEET…DIAA and DKNR…TKGK. Positions 432–441 are enriched in acidic residues; the sequence is ESDDSDDDDI. Residues 732–746 show a composition bias toward basic and acidic residues; it reads SGKEVENGHTNDSRT.

It belongs to the metallo-beta-lactamase superfamily. RNA-metabolizing metallo-beta-lactamase-like family. CPSF2/YSH1 subfamily. As to quaternary structure, CPSF is a heterotetramer composed of four distinct subunits 160, 100, 70 and 30 kDa.

Its subcellular location is the nucleus. In terms of biological role, CPSF plays a key role in pre-mRNA 3'-end formation, recognizing the AAUAAA signal sequence and interacting with poly(A)polymerase and other factors to bring about cleavage and poly(A) addition. The protein is Probable cleavage and polyadenylation specificity factor subunit 2 (cpsf-2) of Caenorhabditis elegans.